Consider the following 292-residue polypeptide: 5,10-methylenetetrahydrofolate reductase (292 aa).

Glu28 functions as the Proton donor/acceptor in the catalytic mechanism. Position 59 (Thr59) interacts with NADH. Positions 60, 62, 88, 118, 119, 120, 132, 152, 156, 165, 168, 171, and 172 each coordinate FAD. Residue Asp120 participates in (6S)-5-methyl-5,6,7,8-tetrahydrofolate binding. Gln183 is a binding site for NADH. 3 residues coordinate (6S)-5-methyl-5,6,7,8-tetrahydrofolate: Gln183, Gln219, and Lys279.

This sequence belongs to the methylenetetrahydrofolate reductase family. Requires FAD as cofactor.

It catalyses the reaction (6S)-5-methyl-5,6,7,8-tetrahydrofolate + NAD(+) = (6R)-5,10-methylene-5,6,7,8-tetrahydrofolate + NADH + H(+). It functions in the pathway one-carbon metabolism; tetrahydrofolate interconversion. Its pathway is amino-acid biosynthesis; L-methionine biosynthesis via de novo pathway. Its function is as follows. Catalyzes the NADH-dependent reduction of 5,10-methylenetetrahydrofolate to 5-methyltetrahydrofolate. Is required to provide the methyl group necessary for methionine synthetase to convert homocysteine to methionine; the methyl group is given by 5-methyltetrahydrofolate. The chain is 5,10-methylenetetrahydrofolate reductase (metF) from Buchnera aphidicola subsp. Schizaphis graminum (strain Sg).